A 241-amino-acid polypeptide reads, in one-letter code: Sugar fermentation stimulation protein homolog (241 aa).

This sequence belongs to the SfsA family.

The chain is Sugar fermentation stimulation protein homolog from Thermosynechococcus vestitus (strain NIES-2133 / IAM M-273 / BP-1).